Consider the following 482-residue polypeptide: Glutamate--tRNA ligase (482 aa).

The short motif at proline 9–glycine 19 is the 'HIGH' region element. Residues lysine 250–arginine 254 carry the 'KMSKS' region motif. Lysine 253 is an ATP binding site.

It belongs to the class-I aminoacyl-tRNA synthetase family. Glutamate--tRNA ligase type 1 subfamily. Monomer.

The protein localises to the cytoplasm. The catalysed reaction is tRNA(Glu) + L-glutamate + ATP = L-glutamyl-tRNA(Glu) + AMP + diphosphate. Its function is as follows. Catalyzes the attachment of glutamate to tRNA(Glu) in a two-step reaction: glutamate is first activated by ATP to form Glu-AMP and then transferred to the acceptor end of tRNA(Glu). This chain is Glutamate--tRNA ligase, found in Desulforamulus reducens (strain ATCC BAA-1160 / DSM 100696 / MI-1) (Desulfotomaculum reducens).